The following is a 380-amino-acid chain: Cytochrome b (380 aa).

Transmembrane regions (helical) follow at residues 33–53, 77–98, 113–133, and 178–198; these read FGSL…FLAM, WLIR…YLHI, WNVG…GYVL, and FFAF…IHLL. Heme b-binding residues include His-83 and His-97. Heme b is bound by residues His-182 and His-196. His-201 serves as a coordination point for a ubiquinone. The next 4 membrane-spanning stretches (helical) occupy residues 226 to 246, 288 to 308, 320 to 340, and 347 to 367; these read YKDL…ALFS, LGGV…PALH, ITQL…WIGG, and FIII…TLIP.

The protein belongs to the cytochrome b family. In terms of assembly, the cytochrome bc1 complex contains 3 respiratory subunits (MT-CYB, CYC1 and UQCRFS1), 2 core proteins (UQCRC1 and UQCRC2) and probably 6 low-molecular weight proteins. Requires heme b as cofactor.

The protein localises to the mitochondrion inner membrane. Component of the ubiquinol-cytochrome c reductase complex (complex III or cytochrome b-c1 complex) that is part of the mitochondrial respiratory chain. The b-c1 complex mediates electron transfer from ubiquinol to cytochrome c. Contributes to the generation of a proton gradient across the mitochondrial membrane that is then used for ATP synthesis. This is Cytochrome b (mt-cyb) from Percopsis transmontana (Sand roller).